A 169-amino-acid chain; its full sequence is Probable GPI-anchored adhesin-like protein PGA22 (169 aa).

The N-terminal stretch at 1-18 (MKYSTLAWLVIASYTVFA) is a signal peptide. Residues Asn87, Asn104, Asn111, and Asn118 are each glycosylated (N-linked (GlcNAc...) asparagine). The GPI-anchor amidated glycine moiety is linked to residue Gly140. Residues 141–169 (PALTTTTVAEAFSLAAGASLGYLVALLFL) constitute a propeptide, removed in mature form.

It localises to the cell membrane. Putative adhesin which may be involved in cell adhesion and virulence. In Candida albicans (strain SC5314 / ATCC MYA-2876) (Yeast), this protein is Probable GPI-anchored adhesin-like protein PGA22 (PGA22).